The sequence spans 343 residues: Glycerol-3-phosphate dehydrogenase [NAD(P)+] (343 aa).

Positions 29, 49, and 122 each coordinate NADPH. Residues Lys-122, Gly-150, and Ser-152 each contribute to the sn-glycerol 3-phosphate site. Ala-154 is an NADPH binding site. Sn-glycerol 3-phosphate contacts are provided by Lys-205, Asp-258, Ser-268, Arg-269, and Asn-270. The active-site Proton acceptor is the Lys-205. Arg-269 lines the NADPH pocket. Residues Leu-288 and Glu-290 each contribute to the NADPH site.

The protein belongs to the NAD-dependent glycerol-3-phosphate dehydrogenase family.

It localises to the cytoplasm. It catalyses the reaction sn-glycerol 3-phosphate + NAD(+) = dihydroxyacetone phosphate + NADH + H(+). It carries out the reaction sn-glycerol 3-phosphate + NADP(+) = dihydroxyacetone phosphate + NADPH + H(+). It functions in the pathway membrane lipid metabolism; glycerophospholipid metabolism. Functionally, catalyzes the reduction of the glycolytic intermediate dihydroxyacetone phosphate (DHAP) to sn-glycerol 3-phosphate (G3P), the key precursor for phospholipid synthesis. This is Glycerol-3-phosphate dehydrogenase [NAD(P)+] from Mesorhizobium japonicum (strain LMG 29417 / CECT 9101 / MAFF 303099) (Mesorhizobium loti (strain MAFF 303099)).